A 174-amino-acid chain; its full sequence is Nucleoside diphosphate kinase (174 aa).

The ATP site is built by lysine 14, phenylalanine 62, arginine 90, threonine 96, and arginine 107. Catalysis depends on histidine 123, which acts as the Pros-phosphohistidine intermediate.

It belongs to the NDK family. Mg(2+) is required as a cofactor.

The protein resides in the cytoplasm. It catalyses the reaction a 2'-deoxyribonucleoside 5'-diphosphate + ATP = a 2'-deoxyribonucleoside 5'-triphosphate + ADP. It carries out the reaction a ribonucleoside 5'-diphosphate + ATP = a ribonucleoside 5'-triphosphate + ADP. Its function is as follows. Major role in the synthesis of nucleoside triphosphates other than ATP. The ATP gamma phosphate is transferred to the NDP beta phosphate via a ping-pong mechanism, using a phosphorylated active-site intermediate. In Thermococcus kodakarensis (strain ATCC BAA-918 / JCM 12380 / KOD1) (Pyrococcus kodakaraensis (strain KOD1)), this protein is Nucleoside diphosphate kinase.